A 602-amino-acid chain; its full sequence is Pyranose dehydrogenase 1 (602 aa).

An N-terminal signal peptide occupies residues 1 to 25 (MLPRVTKLNSRLLSLALLGIQIARG). Residue asparagine 100 is glycosylated (N-linked (GlcNAc...) asparagine). At histidine 128 the chain carries Tele-8alpha-FAD histidine. N-linked (GlcNAc...) asparagine glycosylation is found at asparagine 200, asparagine 277, and asparagine 344. Histidine 537 serves as the catalytic Proton acceptor. Histidine 581 is a catalytic residue.

The protein belongs to the GMC oxidoreductase family. As to quaternary structure, monomer. FAD is required as a cofactor. N-glycosylated.

It is found in the secreted. The enzyme catalyses pyranose + acceptor = pyranos-2-ulose + reduced acceptor.. The catalysed reaction is pyranose + acceptor = pyranos-3-ulose + reduced acceptor.. It catalyses the reaction pyranose + acceptor = pyranos-2,3-diulose + reduced acceptor.. It carries out the reaction a pyranoside + acceptor = a pyranosid-3-ulose + reduced acceptor.. The enzyme catalyses a pyranoside + acceptor = a pyranosid-3,4-diulose + reduced acceptor.. In terms of biological role, catalyzes the single-oxidation or sequential double oxidation reaction of carbohydrates primarily at carbon-2 and/or carbon-3 with the concomitant reduction of the flavin. The enzyme exhibits a broad sugar substrate specificity, oxidizing different aldopyranoses to the corresponding C-1, C-2, C-3 or C-1,2, C-2,3 and C-3,4 (di)dehydro sugars with substrate-specific regioselectivity. Accepts only a narrow range of electron acceptors such as substituted benzoquinones and complexed metal ions and reacts extremely slowly with O(2) as acceptor. May play a role in the natural recycling of plant matter by oxidizing all major monosaccharides in lignocellulose and by reducing quinone compounds or reactive radical species generated during lignin depolymerization. The chain is Pyranose dehydrogenase 1 from Leucoagaricus meleagris (Western flat-topped agaric).